The following is a 313-amino-acid chain: Porphobilinogen deaminase (313 aa).

S-(dipyrrolylmethanemethyl)cysteine is present on Cys242.

The protein belongs to the HMBS family. Monomer. Requires dipyrromethane as cofactor.

The catalysed reaction is 4 porphobilinogen + H2O = hydroxymethylbilane + 4 NH4(+). Its pathway is porphyrin-containing compound metabolism; protoporphyrin-IX biosynthesis; coproporphyrinogen-III from 5-aminolevulinate: step 2/4. Functionally, tetrapolymerization of the monopyrrole PBG into the hydroxymethylbilane pre-uroporphyrinogen in several discrete steps. This is Porphobilinogen deaminase from Escherichia coli (strain SE11).